The primary structure comprises 69 residues: ATP synthase subunits region ORF 1 (69 aa).

This is ATP synthase subunits region ORF 1 from Fuscovulum blasticum (Rhodobacter blasticus).